Reading from the N-terminus, the 438-residue chain is GTPase Der (438 aa).

2 consecutive EngA-type G domains span residues 4–168 and 177–352; these read PIVA…PEGN and IRIA…GNYC. Residues 10–17, 57–61, 120–123, 183–190, 230–234, and 295–298 each bind GTP; these read GRPNVGKS, DTGGI, NKID, DTAGL, and NKWD. The region spanning 353–437 is the KH-like domain; it reads KRIKTGILND…GIKLEFRERK (85 aa).

It belongs to the TRAFAC class TrmE-Era-EngA-EngB-Septin-like GTPase superfamily. EngA (Der) GTPase family. As to quaternary structure, associates with the 50S ribosomal subunit.

Functionally, GTPase that plays an essential role in the late steps of ribosome biogenesis. The polypeptide is GTPase Der (Clostridium novyi (strain NT)).